Consider the following 623-residue polypeptide: MPLPQPLLGGASPAPARAASSFLHPLLHTRHRVSTAPAAASSFVPASHSSHANDAMLLRRAADVADRSAGLTSPHPNFGCVIARPQLNTDSADSWVVGEGFLYAQGTPCAELLASQEAGEHARGGTAYLNLEPGDCFGDNTAVGSLVQAGITRVVVGLRHPLKHLRGKAIQALRNEGIQVDVVGEDLQSKLFKEALKSCLTVNAPLLYRAAFHVPFSVLKYAMTADGKIAASSGHASWISGKASRGRVFELRGRSDAVIVGGNTVRFDDPRLTARHVKGHVPVRIVMSQSLNLPEEANLWNLNDAYTIVATQRGARRDFQRKLAMKGVEVVEFDMLNPRAVMSYCYDRGYLAVLWECGGTLAASAISASVIHKVYAFWAPKIIGGLNAPTPVGELGMSQMTQAINLIDVSYEQIDRDMLMSGFIEPIPDLSPVIPSVEEIPSIDPEVSPYETNIISFYKTWDIFGAFSNFSPHSIQMPDENGDYFTWPTVEHYYQAHKFVGVDNPQARDIVQEIKLAKSPEEAARIGRTRQKGFPELVRTDWESTKIDVMYRAIKCKFSTYPHLTNMLLSTAGSVLVEASPHDLFWGGGREGEGLNYLGRLLMQLRSEILGTVPASAEVGEAD.

Residues 1–45 (MPLPQPLLGGASPAPARAASSFLHPLLHTRHRVSTAPAAASSFVP) constitute a chloroplast transit peptide. The CMP/dCMP-type deaminase domain maps to 52–181 (ANDAMLLRRA…ALRNEGIQVD (130 aa)).

It in the C-terminal section; belongs to the YbiA family.

Its subcellular location is the plastid. The protein localises to the chloroplast. The enzyme catalyses 5-amino-6-(5-phospho-D-ribitylamino)uracil + NADP(+) = 5-amino-6-(5-phospho-D-ribosylamino)uracil + NADPH + H(+). The catalysed reaction is 2,5-diamino-6-hydroxy-4-(5-phosphoribosylamino)-pyrimidine + H2O = 2,5,6-triamino-4-hydroxypyrimidine + D-ribose 5-phosphate. It carries out the reaction 5-amino-6-(5-phospho-D-ribosylamino)uracil + H2O = 5,6-diaminouracil + D-ribose 5-phosphate. The protein operates within cofactor biosynthesis; riboflavin biosynthesis; 5-amino-6-(D-ribitylamino)uracil from GTP: step 3/4. Functionally, pyrimidine reductase involved in the riboflavin biosynthesis pathway. Also has a non-functional N-terminal deaminase domain that lacks the catalytically essential zinc-binding residues. 39% activity when NADH replaces NADPH. No evidence for a phosphatase activity conferred by the N-terminal domain. Catalyzes the hydrolysis of the N-glycosidic bond in the first two intermediates of riboflavin biosynthesis, which are highly reactive metabolites, yielding relatively innocuous products. Thus, can divert a surplus of harmful intermediates into relatively harmless products and pre-empt the damage these intermediates would otherwise do. Has no activity against GTP, nucleoside monophosphates or ADP-ribose. In Zea mays (Maize), this protein is Riboflavin biosynthesis protein PYRR, chloroplastic (PYRR).